A 126-amino-acid chain; its full sequence is MADLAQLEEQIVGLSLLDAAELVKKLESRLGVSAAAAAPVMVAGGGGAAAAAPVEEKTEFTVVLTAAGANKINVIKAVREVTSLGLKEAKDLVDGAPKTVKEGVSKDEAATIQKKFQEAGATVEVK.

It belongs to the bacterial ribosomal protein bL12 family. Homodimer. Part of the ribosomal stalk of the 50S ribosomal subunit. Forms a multimeric L10(L12)X complex, where L10 forms an elongated spine to which 2 to 4 L12 dimers bind in a sequential fashion. Binds GTP-bound translation factors.

Forms part of the ribosomal stalk which helps the ribosome interact with GTP-bound translation factors. Is thus essential for accurate translation. This is Large ribosomal subunit protein bL12 from Koribacter versatilis (strain Ellin345).